Consider the following 1938-residue polypeptide: MSSDQEMAIFGEAAPYLRKSEKERIEAQNKPFDAKTSVFVADPKESFVKATVQSREGGKVTAKTEAGATVTVKEDQCFPMNPPKYDKIEDMAMMTHLHEPAVLYNLKERYAAWMIYTYSGLFCVTVNPYKWLPVYNAEVVTAYRGKKRQEAPPHIFSISDNAYQFMLTDRENQSILITGESGAGKTVNTKRVIQYFATIAVTGEKKKEEPTSGKMQGTLEDQIISANPLLEAFGNAKTVRNDNSSRFGKFIRIHFGTTGKLASADIETYLLEKSRVTFQLKAERSYHIFYQIMSNKKPDLIEMLLITTNPYDYAFVSQGEITVPSIDDQEELMATDSAIEILGFTSDERVSIYKLTGAVMHYGNLKFKQKQREEQAEPDGTEVADKAAYLQGLNSADLLKALCYPRVKVGNEFVTKGQTVEQVYNAVGALAKAVYDKMFLWMVARINQQLDTKQPRQYFIGVLDIAGFEIFDFNSLEQLCINFTNEKLQQFFNHHMFVLEQEEYKKEGIEWEFIDFGMDLAACIELIEKPMGIFSILEEECMFPKATDTSFKNKLYEQHLGKSNNFQKPKPVKGKPEAHFSLIHYAGTVDYNITGWLDKNKDPLNETVVGLYQKSSVKTLALLFSGPASADAEAGGKKGGKKKGSSFQTVSALFRENLNKLMTNLRSTHPHFVRCIIPNETKTPGAMEHELVLHQLRCNGVLEGIRICRKGFPSRILYADFKQRYKVLNASAIPEGQFIDSKKASEKLLGSIDIDHTQYKFGHTKVFFKAGLLGLLEEMRDDKLAQIITRTQARCRGFLARVEYQRMVERRESIFCIQYNVRAFMNVKHWPWMKLYFKIKPLLKSAETEKEMANMKEEFEKTKESLAKAEAKRKELEEKMVALMQEKNDLQLQVQAEADSLADAEERCDQLIKTKIQLEAKIKEATERAEDEEEINAELTAKKRKLEDECSELKKDIDDLELTLAKVEKEKHATENKVKNLTEEMAGLDETIAKLTKEKKALQEAHQQTLDDLQAEEDKVNTLTKAKTKLEQQVDDLEGSLEQEKKLRMDLERAKRKLEGDLKLAQESTMDIENDKQQLDEKLKKKEFEMSNLQSKIEDEQALAMQLQKKIKELQARIEELEEEIEAERASRAKAEKQRSDLSRELEEISERLEEAGGATSAQIEMNKKREAEFQKMRRDLEEATLQHEATAAALRKKHADSVAELGEQIDNLQRVKQKLEKEKSEMKMEIDDLASNMETVSKAKGNLEKMCRTLEDQLSELKSKEEEQQRLVNDLTGQRARLQTEAGEYSRQLDEKDSLVSQLSRGKQAFTQQIEELKRQLEEEIKAKSALAHALQSARHDCDLLREQYEEEQEAKAELQRAMSKANSEVAQWRTKYETDAIQRTEELEEAKKKLAQRLQDAEEHVEAVNAKCASLEKTKQRLQNEVEDLMIDVERTNAACAALDKKQRNFDKILSEWKHKYEETHAELEASQKESRSLSTELFKVKNAYEESLDQLETLKRENKNLQQEISDLTEQIAEGGKRIHELEKVKKQIEQEKSEIQAALEEAEASLEHEEGKILRIQLELNQVKSEIDRKIAEKDEEIDQLKRNHVRVVETMQTMLDAEIRSRNDAIRIKKKMEGDLNEMEIQLNHANRMAAEALRNYRNTQGILKDTQLHLDDALRGQEDLKEQLAMVERRANLLQAEIEELRATLEQTERSRKIAEQELLDASERVQLLHTQNTSLINTKKKLETDISQLQGEMEDIVQEAHNAEEKAKKAITDAAMMAEELKKEQDTSAHLERMKKNLEQTVKDLQHRLDEAEQLALKGGKKQIQKLEARVRDLEGEVESEQKRNVEAVKGLRKHERRVKELTYQTEEDRKNILRLQDLVDKLQSKVKAYKRQAEEAEEQSNVNLSKFRKIQHELEEAEERADIAESQVNKLRVKSREVHTKIISEE.

The Myosin N-terminal SH3-like domain occupies D33–P82. Phosphothreonine is present on residues T64 and T69. A Myosin motor domain is found at D86–D781. Residue K130 is modified to N6,N6,N6-trimethyllysine. G179–T186 is an ATP binding site. Position 389 is a phosphotyrosine (Y389). At T419 the chain carries Phosphothreonine. Y424 is modified (phosphotyrosine). Residue S625 is modified to Phosphoserine. Residues L658–E680 are actin-binding. Pros-methylhistidine is present on H756. An actin-binding region spans residues K760–G774. Residues L784 to S813 enclose the IQ domain. Positions L842 to E1938 form a coiled coil. A phosphoserine mark is found at S1091 and S1095. 2 disordered regions span residues E1124–L1146 and R1152–E1171. The segment covering A1127–L1146 has biased composition (basic and acidic residues). 2 positions are modified to phosphoserine: S1161 and S1236. Position 1240 is a phosphothreonine (T1240). At S1242 the chain carries Phosphoserine. Phosphothreonine is present on T1254. The residue at position 1260 (S1260) is a Phosphoserine. Residue T1285 is modified to Phosphothreonine. S1291, S1302, and S1305 each carry phosphoserine. The residue at position 1463 (Y1463) is a Phosphotyrosine. Position 1466 is a phosphothreonine (T1466). S1473 is subject to Phosphoserine. A Phosphotyrosine modification is found at Y1491. Phosphoserine is present on S1494. Position 1500 is a phosphothreonine (T1500). Phosphoserine is present on S1513. Residue T1516 is modified to Phosphothreonine. A phosphoserine mark is found at S1541, S1553, S1573, S1713, and S1725. Phosphothreonine occurs at positions 1729 and 1735. The residue at position 1738 (S1738) is a Phosphoserine.

Belongs to the TRAFAC class myosin-kinesin ATPase superfamily. Myosin family. Muscle myosin is a hexameric protein that consists of 2 heavy chain subunits (MHC), 2 alkali light chain subunits (MLC) and 2 regulatory light chain subunits (MLC-2). Interacts with SLC26A5.

The protein resides in the cytoplasm. It localises to the myofibril. Its function is as follows. Required for normal hearing. It plays a role in cochlear amplification of auditory stimuli, likely through the positive regulation of prestin (SLC26A5) activity and outer hair cell (OHC) electromotility. This is Myosin-1 (MYH1) from Equus caballus (Horse).